The sequence spans 506 residues: D-alanine--D-alanyl carrier protein ligase (506 aa).

152–153 is a binding site for ATP; sequence TS. Aspartate 197 is a D-alanine binding site. Residue 292–297 participates in ATP binding; sequence NTYGPT. Valine 301 contributes to the D-alanine binding site. Residues aspartate 383, 395–398, and lysine 494 contribute to the ATP site; that span reads YRGR. A D-alanine-binding site is contributed by lysine 494.

This sequence belongs to the ATP-dependent AMP-binding enzyme family. DltA subfamily.

The protein resides in the cytoplasm. It carries out the reaction holo-[D-alanyl-carrier protein] + D-alanine + ATP = D-alanyl-[D-alanyl-carrier protein] + AMP + diphosphate. The protein operates within cell wall biogenesis; lipoteichoic acid biosynthesis. Functionally, catalyzes the first step in the D-alanylation of lipoteichoic acid (LTA), the activation of D-alanine and its transfer onto the D-alanyl carrier protein (Dcp) DltC. In an ATP-dependent two-step reaction, forms a high energy D-alanyl-AMP intermediate, followed by transfer of the D-alanyl residue as a thiol ester to the phosphopantheinyl prosthetic group of the Dcp. D-alanylation of LTA plays an important role in modulating the properties of the cell wall in Gram-positive bacteria, influencing the net charge of the cell wall. The chain is D-alanine--D-alanyl carrier protein ligase from Lacticaseibacillus paracasei (strain ATCC 334 / BCRC 17002 / CCUG 31169 / CIP 107868 / KCTC 3260 / NRRL B-441) (Lactobacillus paracasei).